A 322-amino-acid polypeptide reads, in one-letter code: Dioxygenase himG (322 aa).

Fe cation contacts are provided by H148 and H229.

Belongs to the PhyH family. As to quaternary structure, homodimer. It depends on Fe cation as a cofactor.

It participates in secondary metabolite biosynthesis. Functionally, polyketide synthase-nonribosomal peptide synthetase; part of the him gene cluster that mediates the biosynthesis of himeic acid A, a ubiquitin-activating enzyme (E1) inhibitor. First, himA, together with the trans-enoyl reductase himH, catalyzes the formation of apolyketide chain, which is then condensed with leucine by the NRPS activity of himA. Dieckmann cyclization and release from himA gives a tetramic acid intermediate as the product of himA PKS-NRPS. HimG then catalyzes alpha-oxidation of the tetramic acid ring, with a subsequent rearrangement to yield apyrone intermediate. Two terminal methyl groups of polyketide and amide side chains are oxidized to carboxylic acids by himC cytochrome P450 monooxygenase to form himeic acid A. Himeic acid A is further converted to himeic acid B and C during culture growth. No gene responsible for pyrone to pyridone conversion was found in the him gene cluster and himeic acid A is non-enzymatically converted to himeic acid C by the incorporation of an ammonium nitrogen atom in a pH5 buffer, and to himeic acid B at a conversion ratio of 50% during incubation in MeOH for 5 days. The chain is Dioxygenase himG from Aspergillus japonicus.